We begin with the raw amino-acid sequence, 215 residues long: Coat protein (215 aa).

Residues 1 to 34 are disordered; that stretch reads MATQNADVTDATDYKKPPAETEQKALTIQPRSNK. A compositionally biased stretch (basic and acidic residues) spans 12 to 23; sequence TDYKKPPAETEQ. Polar residues predominate over residues 24 to 34; it reads KALTIQPRSNK.

This sequence belongs to the potexvirus capsid protein family.

Its subcellular location is the virion. Functionally, required for genome encapsidation. Forms ribonucleoprotein complexes along with TGB1 helicase and viral RNA. The polypeptide is Coat protein (Setaria italica (Foxtail millet)).